A 105-amino-acid polypeptide reads, in one-letter code: Defensin-like protein (105 aa).

The signal sequence occupies residues 1–25; the sequence is MARSLCFMAFAILAMMLFVAYEVQA. 4 disulfides stabilise this stretch: cysteine 28/cysteine 72, cysteine 39/cysteine 59, cysteine 45/cysteine 66, and cysteine 49/cysteine 68.

This sequence belongs to the DEFL family. Flower. Found in petals, stamen and pistils, but not in sepals. In particular, accumulation in a configuration surrounding the inner reproductive whorls.

The protein localises to the secreted. It is found in the cell wall. The protein resides in the vacuole. Involved in floral organogenesis. May play a protective role in flowers by protecting the reproductive organs from potential pathogen attack. The polypeptide is Defensin-like protein (FST) (Nicotiana tabacum (Common tobacco)).